Here is a 276-residue protein sequence, read N- to C-terminus: Putative metal-binding protein TC_0696 (276 aa).

Residues 1–18 (MRLLILLLFSFGIIYSHG) form the signal peptide. 4 residues coordinate a divalent metal cation: His-59, His-121, His-185, and Asp-256.

It belongs to the bacterial solute-binding protein 9 family.

It localises to the periplasm. Part of an ATP-binding cassette (ABC) transport system involved in metal import. Binds a metal with high affinity and specificity and delivers it to the membrane permease for translocation into the cytoplasm. The chain is Putative metal-binding protein TC_0696 from Chlamydia muridarum (strain MoPn / Nigg).